We begin with the raw amino-acid sequence, 339 residues long: Protein H339R (339 aa).

This sequence belongs to the asfivirus H339R family. As to quaternary structure, interacts with NACA (alpha chain of nascent polypeptide-associated complex).

The protein resides in the host cytoplasm. It localises to the host nucleus. The protein localises to the virion. This Ornithodoros (relapsing fever ticks) protein is Protein H339R.